A 103-amino-acid chain; its full sequence is Large ribosomal subunit protein uL24 (103 aa).

This sequence belongs to the universal ribosomal protein uL24 family. Part of the 50S ribosomal subunit.

Its function is as follows. One of two assembly initiator proteins, it binds directly to the 5'-end of the 23S rRNA, where it nucleates assembly of the 50S subunit. In terms of biological role, one of the proteins that surrounds the polypeptide exit tunnel on the outside of the subunit. The protein is Large ribosomal subunit protein uL24 of Anoxybacillus flavithermus (strain DSM 21510 / WK1).